Consider the following 231-residue polypeptide: L-ribulose-5-phosphate 4-epimerase SgbE (231 aa).

Substrate contacts are provided by residues 27–28 (GN), 44–45 (SG), and 74–75 (SS). The Zn(2+) site is built by Asp-76, His-95, and His-97. Asp-120 acts as the Proton donor/acceptor in catalysis. His-171 is a binding site for Zn(2+). Catalysis depends on Tyr-229, which acts as the Proton donor/acceptor.

This sequence belongs to the aldolase class II family. AraD/FucA subfamily. Zn(2+) serves as cofactor.

The enzyme catalyses L-ribulose 5-phosphate = D-xylulose 5-phosphate. In terms of biological role, catalyzes the interconversion of L-ribulose 5-phosphate (LRu5P) and D-xylulose 5-phosphate (D-Xu5P) via a retroaldol/aldol mechanism (carbon-carbon bond cleavage analogous to a class II aldolase reaction). May be involved in the utilization of 2,3-diketo-L-gulonate. This is L-ribulose-5-phosphate 4-epimerase SgbE from Haemophilus influenzae (strain ATCC 51907 / DSM 11121 / KW20 / Rd).